The primary structure comprises 735 residues: Wall-associated receptor kinase 1 (735 aa).

The N-terminal stretch at 1–24 is a signal peptide; sequence MKVQEGLFLVAIFFSLACTQLVKG. The Extracellular segment spans residues 25–331; it reads QHQPGENCQN…TTTMSCKRKE (307 aa). Residues asparagine 38, asparagine 56, asparagine 80, asparagine 90, asparagine 113, asparagine 140, asparagine 209, asparagine 235, and asparagine 250 are each glycosylated (N-linked (GlcNAc...) asparagine). Positions 67 to 254 are polygalacturonic acid-binding; the sequence is RPHVLSDIEV…SICGGNSTCL (188 aa). The EGF-like 1 domain maps to 234–281; it reads GNQTCEQVGSTSICGGNSTCLDSTPRNGYICRCNEGFDGNPYLSAGCQ. Intrachain disulfides connect cysteine 238–cysteine 253, cysteine 247–cysteine 264, cysteine 266–cysteine 280, cysteine 286–cysteine 303, cysteine 297–cysteine 312, and cysteine 314–cysteine 327. The EGF-like 2; calcium-binding domain maps to 282–328; sequence DVNECTTSSTIHRHNCSDPKTCRNKVGGFYCKCQSGYRLDTTTMSCK. N-linked (GlcNAc...) asparagine glycosylation is present at asparagine 296. The helical transmembrane segment at 332 to 352 threads the bilayer; sequence FAWTTILLVTTIGFLVILLGV. At 353 to 735 the chain is on the cytoplasmic side; sequence ACIQQRMKHL…VAILDIETGR (383 aa). Threonine 398 carries the post-translational modification Phosphothreonine. Positions 409–692 constitute a Protein kinase domain; the sequence is YAESRILGQG…RVEKTKHKWS (284 aa). Residues 415–423 and lysine 437 contribute to the ATP site; that span reads LGQGGQGTV. A Phosphotyrosine modification is found at tyrosine 482. Aspartate 534 serves as the catalytic Proton acceptor. Threonine 568 and threonine 573 each carry phosphothreonine. Tyrosine 581 carries the phosphotyrosine modification.

This sequence belongs to the protein kinase superfamily. Ser/Thr protein kinase family. As to quaternary structure, interacts with the glycine-rich proteins GRP3 and GRP3S, and the type 2C protein phosphatase KAPP. Component of a 500 kDa complex, composed of WAK1, GRP3 and KAPP. Interacts with the oxygen-evolving enhancer protein 2 (OEE2). In terms of tissue distribution, predominantly expressed in green tissues such as stems and leaves. Detected at organ junctions.

It localises to the membrane. The enzyme catalyses L-seryl-[protein] + ATP = O-phospho-L-seryl-[protein] + ADP + H(+). It carries out the reaction L-threonyl-[protein] + ATP = O-phospho-L-threonyl-[protein] + ADP + H(+). Its function is as follows. Serine/threonine-protein kinase that may function as a signaling receptor of extracellular matrix component. Binding to pectin may have significance in the control of cell expansion, morphogenesis and development. Required during plant's response to pathogen infection and in plant defense against heavy metal toxicity. Phosphorylates the oxygen-evolving enhancer protein 2 (OEE2) in an GRP-3-dependent manner. The protein is Wall-associated receptor kinase 1 (WAK1) of Arabidopsis thaliana (Mouse-ear cress).